Here is a 302-residue protein sequence, read N- to C-terminus: Protease HtpX homolog (302 aa).

Residues 27–47 (LLMAIGGIIGGTAGMLIALII) traverse the membrane as a helical segment. His141 contributes to the Zn(2+) binding site. Glu142 is an active-site residue. His145 is a Zn(2+) binding site. 2 consecutive transmembrane segments (helical) span residues 151-171 (VLVATIAATIAGAIGFLANMA) and 195-215 (IGAILMIIIVPIIATIVQLAI). Residue Glu220 coordinates Zn(2+).

The protein belongs to the peptidase M48B family. Zn(2+) serves as cofactor.

The protein resides in the cell inner membrane. In Aquifex aeolicus (strain VF5), this protein is Protease HtpX homolog.